Reading from the N-terminus, the 533-residue chain is SH3 and F-BAR domain-containing protein DDB_G0271676 (533 aa).

One can recognise an F-BAR domain in the interval 5-258 (RQFSEDLWDK…GIESIDRERD (254 aa)). The stretch at 76-186 (REQLELIGAL…ADKGDNEYRE (111 aa)) forms a coiled coil. Composition is skewed to basic and acidic residues over residues 126-155 (LKTA…EDLS) and 162-184 (KEQK…DNEY). 2 disordered regions span residues 126-184 (LKTA…DNEY) and 301-405 (SRKS…INSN). Composition is skewed to low complexity over residues 318–327 (SIISSPQQPQ), 340–360 (NIII…NNSN), 372–385 (PQQQ…QLNN), and 392–405 (SLSK…INSN). SH3 domains are found at residues 406-468 (SNGE…DSSD) and 476-533 (VAGR…VQVI).

The protein is SH3 and F-BAR domain-containing protein DDB_G0271676 of Dictyostelium discoideum (Social amoeba).